Consider the following 63-residue polypeptide: Small ribosomal subunit protein eS31 (63 aa).

Positions 31, 34, 50, and 53 each coordinate Zn(2+). Residues 31–53 (CPRCGSIMAHHMKPVERWACGKC) form a C4-type zinc finger.

It belongs to the eukaryotic ribosomal protein eS31 family. As to quaternary structure, part of the 30S ribosomal subunit. Zn(2+) is required as a cofactor.

In Sulfurisphaera tokodaii (strain DSM 16993 / JCM 10545 / NBRC 100140 / 7) (Sulfolobus tokodaii), this protein is Small ribosomal subunit protein eS31.